The following is a 337-amino-acid chain: Glyceraldehyde-3-phosphate dehydrogenase (337 aa).

NAD(+) is bound by residues 12–13, aspartate 34, and lysine 79; that span reads RI. Residues 150–152, threonine 181, 210–211, and arginine 233 contribute to the D-glyceraldehyde 3-phosphate site; these read SCT and TG. Residue cysteine 151 is the Nucleophile of the active site. Asparagine 315 lines the NAD(+) pocket.

It belongs to the glyceraldehyde-3-phosphate dehydrogenase family. As to quaternary structure, homotetramer.

Its subcellular location is the cytoplasm. It catalyses the reaction D-glyceraldehyde 3-phosphate + phosphate + NAD(+) = (2R)-3-phospho-glyceroyl phosphate + NADH + H(+). It participates in carbohydrate degradation; glycolysis; pyruvate from D-glyceraldehyde 3-phosphate: step 1/5. This chain is Glyceraldehyde-3-phosphate dehydrogenase (GPD), found in Schizophyllum commune (Split gill fungus).